The primary structure comprises 98 residues: NADH-ubiquinone oxidoreductase chain 4L (98 aa).

The next 3 helical transmembrane spans lie at M1–M21, L31–I51, and I61–V81.

The protein belongs to the complex I subunit 4L family. In terms of assembly, core subunit of respiratory chain NADH dehydrogenase (Complex I) which is composed of 45 different subunits.

The protein resides in the mitochondrion inner membrane. The catalysed reaction is a ubiquinone + NADH + 5 H(+)(in) = a ubiquinol + NAD(+) + 4 H(+)(out). Its function is as follows. Core subunit of the mitochondrial membrane respiratory chain NADH dehydrogenase (Complex I) which catalyzes electron transfer from NADH through the respiratory chain, using ubiquinone as an electron acceptor. Part of the enzyme membrane arm which is embedded in the lipid bilayer and involved in proton translocation. This is NADH-ubiquinone oxidoreductase chain 4L (MT-ND4L) from Chalinolobus tuberculatus (New Zealand long-tailed bat).